Consider the following 575-residue polypeptide: Protein NRT1/ PTR FAMILY 5.6 (575 aa).

The next 2 helical transmembrane spans lie at 44 to 64 and 88 to 108; these read AALF…GLAT and WSGV…AYLG. Phosphothreonine is present on threonine 112. A run of 10 helical transmembrane segments spans residues 113 to 133, 153 to 173, 195 to 215, 223 to 243, 339 to 359, 375 to 395, 420 to 440, 457 to 477, 493 to 513, and 541 to 561; these read VLVA…SWFI, VAFF…KPSL, FFNW…TAVA, WGVA…IFFI, LIIN…CATQ, IGGF…TLII, ILQR…IAAL, VIWL…TLVG, LGIA…NLLI, and FYWF…IVAK.

The protein belongs to the major facilitator superfamily. Proton-dependent oligopeptide transporter (POT/PTR) (TC 2.A.17) family. In terms of tissue distribution, expressed in stems, shoots, leaves, flowers and siliques.

It is found in the membrane. In Arabidopsis thaliana (Mouse-ear cress), this protein is Protein NRT1/ PTR FAMILY 5.6 (NPF5.6).